A 291-amino-acid polypeptide reads, in one-letter code: Glycine--tRNA ligase alpha subunit (291 aa).

The protein belongs to the class-II aminoacyl-tRNA synthetase family. Tetramer of two alpha and two beta subunits.

It is found in the cytoplasm. The catalysed reaction is tRNA(Gly) + glycine + ATP = glycyl-tRNA(Gly) + AMP + diphosphate. The sequence is that of Glycine--tRNA ligase alpha subunit from Nitratidesulfovibrio vulgaris (strain DSM 19637 / Miyazaki F) (Desulfovibrio vulgaris).